The chain runs to 1343 residues: Protein cordon-bleu (1343 aa).

6 disordered regions span residues 1–51, 301–479, 522–613, 733–808, 1056–1077, and 1105–1148; these read MNLG…GDCK, KVEL…PAAE, VSVA…NGYE, IDKP…TRVL, EKPTSSERISTLHGGDKTKSLD, and INNF…NVFG. Residues 20–30 show a composition bias toward pro residues; the sequence is APPPPRPPQPA. The short motif at 305–310 is the KKRRAP 1 element; it reads KKRRAP. A compositionally biased stretch (polar residues) spans 324-335; the sequence is SQISLGSPSSHN. The KKRRAP 2 motif lies at 338–343; the sequence is KKRKAP. A compositionally biased stretch (pro residues) spans 343 to 354; that stretch reads PAPPPTPPPSTP. Residues 390–400 show a composition bias toward basic and acidic residues; that stretch reads DLSHSIEDSEP. Positions 406-422 are enriched in low complexity; the sequence is SSSSGDDAAAVGSSSSS. A compositionally biased stretch (basic and acidic residues) spans 445–460; that stretch reads PEPKPEYEPELKKEAS. A compositionally biased stretch (polar residues) spans 552–573; that stretch reads ERMQSVSPMDIMSLNSDSTLPV. The span at 746–757 shows a compositional bias: basic and acidic residues; that stretch reads PSQDAKITDNME. Polar residues predominate over residues 773–789; that stretch reads VELTSQKDTVLQKSQSF. Polar residues predominate over residues 1105-1122; sequence INNFPDTSSARQTPTDTT. The span at 1128 to 1137 shows a compositional bias: basic and acidic residues; the sequence is KKPELHKSEI. WH2 domains follow at residues 1167–1187 and 1207–1227; these read IHSSLMEAIQSGEGIERLRKV and ERSALLSAIRASSTSAKLKKT. The interval 1246 to 1297 is disordered; that stretch reads NVHTEVISPRPTSPDFVPPLPPSFSPPPPPPPPLAPAKPPVVLPPGGNPEAA. Pro residues predominate over residues 1261 to 1292; that stretch reads FVPPLPPSFSPPPPPPPPLAPAKPPVVLPPGG. Positions 1297–1317 constitute a WH2 3 domain; that stretch reads AREALLEAIRSGSGAQQLRKV.

As to quaternary structure, interacts with pacsin1.

It is found in the cell membrane. The protein localises to the cytoplasm. Its subcellular location is the cytoskeleton. The protein resides in the cell projection. It localises to the ruffle. It is found in the cytosol. Its function is as follows. Plays an important role in the reorganization of the actin cytoskeleton. Binds to and sequesters actin monomers (G actin). Nucleates actin polymerization by assembling three actin monomers in cross-filament orientation and thereby promotes growth of actin filaments at the barbed end. Can also mediate actin depolymerization at barbed ends and severing of actin filaments. Promotes formation of cell ruffles. Regulates neuron morphogenesis and increases branching of axons and dendrites. Required for normal embryonic development, including normal development of laterality, normal body size and shape, as well as normal brain, heart and kidney development. Required for normal development of stereocilia and kinocilia in sensory hair cells of neuromasts in the posterior lateral line organ, and thus also for balance keeping and normal swimming behavior. This chain is Protein cordon-bleu (cobl), found in Danio rerio (Zebrafish).